Consider the following 715-residue polypeptide: Ribosomal RNA large subunit methyltransferase K/L (715 aa).

Positions 47–158 constitute a THUMP domain; sequence LGYKISLWTR…RDNVTIFLDF (112 aa).

Belongs to the methyltransferase superfamily. RlmKL family.

It is found in the cytoplasm. The enzyme catalyses guanosine(2445) in 23S rRNA + S-adenosyl-L-methionine = N(2)-methylguanosine(2445) in 23S rRNA + S-adenosyl-L-homocysteine + H(+). The catalysed reaction is guanosine(2069) in 23S rRNA + S-adenosyl-L-methionine = N(2)-methylguanosine(2069) in 23S rRNA + S-adenosyl-L-homocysteine + H(+). Specifically methylates the guanine in position 2445 (m2G2445) and the guanine in position 2069 (m7G2069) of 23S rRNA. The sequence is that of Ribosomal RNA large subunit methyltransferase K/L from Colwellia psychrerythraea (strain 34H / ATCC BAA-681) (Vibrio psychroerythus).